Here is a 373-residue protein sequence, read N- to C-terminus: Dual-specificity RNA methyltransferase RlmN (373 aa).

The Proton acceptor role is filled by E94. The 240-residue stretch at 100 to 339 (EDDRATLCVS…VIVRKTRGDD (240 aa)) folds into the Radical SAM core domain. C107 and C344 form a disulfide bridge. [4Fe-4S] cluster is bound by residues C114, C118, and C121. S-adenosyl-L-methionine-binding positions include 168 to 169 (GE), S200, 222 to 224 (SIH), and N301. C344 serves as the catalytic S-methylcysteine intermediate.

Belongs to the radical SAM superfamily. RlmN family. [4Fe-4S] cluster serves as cofactor.

It localises to the cytoplasm. The catalysed reaction is adenosine(2503) in 23S rRNA + 2 reduced [2Fe-2S]-[ferredoxin] + 2 S-adenosyl-L-methionine = 2-methyladenosine(2503) in 23S rRNA + 5'-deoxyadenosine + L-methionine + 2 oxidized [2Fe-2S]-[ferredoxin] + S-adenosyl-L-homocysteine. It carries out the reaction adenosine(37) in tRNA + 2 reduced [2Fe-2S]-[ferredoxin] + 2 S-adenosyl-L-methionine = 2-methyladenosine(37) in tRNA + 5'-deoxyadenosine + L-methionine + 2 oxidized [2Fe-2S]-[ferredoxin] + S-adenosyl-L-homocysteine. Its function is as follows. Specifically methylates position 2 of adenine 2503 in 23S rRNA and position 2 of adenine 37 in tRNAs. m2A2503 modification seems to play a crucial role in the proofreading step occurring at the peptidyl transferase center and thus would serve to optimize ribosomal fidelity. This is Dual-specificity RNA methyltransferase RlmN from Shewanella denitrificans (strain OS217 / ATCC BAA-1090 / DSM 15013).